A 290-amino-acid polypeptide reads, in one-letter code: Light-independent protochlorophyllide reductase iron-sulfur ATP-binding protein (290 aa).

Residues 10–15 (GIGKST) and Lys39 contribute to the ATP site. Ser14 contacts Mg(2+). Residues Cys95 and Cys129 each coordinate [4Fe-4S] cluster. 180 to 181 (NR) serves as a coordination point for ATP.

The protein belongs to the NifH/BchL/ChlL family. Homodimer. Protochlorophyllide reductase is composed of three subunits; ChlL, ChlN and ChlB. It depends on [4Fe-4S] cluster as a cofactor.

Its subcellular location is the plastid. It localises to the chloroplast. It carries out the reaction chlorophyllide a + oxidized 2[4Fe-4S]-[ferredoxin] + 2 ADP + 2 phosphate = protochlorophyllide a + reduced 2[4Fe-4S]-[ferredoxin] + 2 ATP + 2 H2O. It participates in porphyrin-containing compound metabolism; chlorophyll biosynthesis (light-independent). Its function is as follows. Component of the dark-operative protochlorophyllide reductase (DPOR) that uses Mg-ATP and reduced ferredoxin to reduce ring D of protochlorophyllide (Pchlide) to form chlorophyllide a (Chlide). This reaction is light-independent. The L component serves as a unique electron donor to the NB-component of the complex, and binds Mg-ATP. This Anthoceros angustus (Hornwort) protein is Light-independent protochlorophyllide reductase iron-sulfur ATP-binding protein.